Here is a 466-residue protein sequence, read N- to C-terminus: 3-isopropylmalate dehydratase large subunit (466 aa).

[4Fe-4S] cluster contacts are provided by cysteine 347, cysteine 407, and cysteine 410.

Belongs to the aconitase/IPM isomerase family. LeuC type 1 subfamily. As to quaternary structure, heterodimer of LeuC and LeuD. Requires [4Fe-4S] cluster as cofactor.

It carries out the reaction (2R,3S)-3-isopropylmalate = (2S)-2-isopropylmalate. It functions in the pathway amino-acid biosynthesis; L-leucine biosynthesis; L-leucine from 3-methyl-2-oxobutanoate: step 2/4. In terms of biological role, catalyzes the isomerization between 2-isopropylmalate and 3-isopropylmalate, via the formation of 2-isopropylmaleate. This Vibrio campbellii (strain ATCC BAA-1116) protein is 3-isopropylmalate dehydratase large subunit.